The sequence spans 153 residues: Cytochrome c-type biogenesis protein CcmE (153 aa).

Topologically, residues 1 to 8 (MTTRRGRR) are cytoplasmic. The helical; Signal-anchor for type II membrane protein transmembrane segment at 9-29 (ALLIAGGVGLLALAAALVLNA) threads the bilayer. Residues 30 to 153 (LRSNLVFFFS…PSATLQTEAR (124 aa)) are Periplasmic-facing. Residues H124 and Y128 each coordinate heme.

This sequence belongs to the CcmE/CycJ family.

The protein localises to the cell inner membrane. Heme chaperone required for the biogenesis of c-type cytochromes. Transiently binds heme delivered by CcmC and transfers the heme to apo-cytochromes in a process facilitated by CcmF and CcmH. This is Cytochrome c-type biogenesis protein CcmE from Bordetella parapertussis (strain 12822 / ATCC BAA-587 / NCTC 13253).